A 253-amino-acid polypeptide reads, in one-letter code: Triosephosphate isomerase (253 aa).

9-11 (NWK) contacts substrate. The active-site Electrophile is the histidine 95. The active-site Proton acceptor is glutamate 167. Residues glycine 173, serine 213, and 234-235 (GG) contribute to the substrate site. Serine 213 carries the post-translational modification Phosphoserine.

Belongs to the triosephosphate isomerase family. In terms of assembly, homodimer.

It is found in the cytoplasm. It carries out the reaction D-glyceraldehyde 3-phosphate = dihydroxyacetone phosphate. Its pathway is carbohydrate biosynthesis; gluconeogenesis. It participates in carbohydrate degradation; glycolysis; D-glyceraldehyde 3-phosphate from glycerone phosphate: step 1/1. In terms of biological role, involved in the gluconeogenesis. Catalyzes stereospecifically the conversion of dihydroxyacetone phosphate (DHAP) to D-glyceraldehyde-3-phosphate (G3P). The polypeptide is Triosephosphate isomerase (Geobacillus thermodenitrificans (strain NG80-2)).